A 224-amino-acid polypeptide reads, in one-letter code: MTARIGIITFPGTLDDVDAARAARRVGAQPVSLWHADADLKGVDAVVVPGGFSYGDYLRAGAIARFAPVMTEVVDAARRGMPVLGICNGFQVLCEAGLLPGALTRNVGLHFICRDVWLRVASTSTAWTSRFEPDADLLVPLKSGEGRYVAPADVLDELEGEGRVVFRYHENLNGSQRDIAGVSSADGRVVGLMPHPEHAIEALTGPSDDGLGLFYSVLDGVLAG.

Positions 4 to 224 (RIGIITFPGT…YSVLDGVLAG (221 aa)) constitute a Glutamine amidotransferase type-1 domain. The active-site Nucleophile is the Cys-87. Residues His-195 and Glu-197 contribute to the active site.

As to quaternary structure, part of the FGAM synthase complex composed of 1 PurL, 1 PurQ and 2 PurS subunits.

Its subcellular location is the cytoplasm. It carries out the reaction N(2)-formyl-N(1)-(5-phospho-beta-D-ribosyl)glycinamide + L-glutamine + ATP + H2O = 2-formamido-N(1)-(5-O-phospho-beta-D-ribosyl)acetamidine + L-glutamate + ADP + phosphate + H(+). The enzyme catalyses L-glutamine + H2O = L-glutamate + NH4(+). It functions in the pathway purine metabolism; IMP biosynthesis via de novo pathway; 5-amino-1-(5-phospho-D-ribosyl)imidazole from N(2)-formyl-N(1)-(5-phospho-D-ribosyl)glycinamide: step 1/2. Part of the phosphoribosylformylglycinamidine synthase complex involved in the purines biosynthetic pathway. Catalyzes the ATP-dependent conversion of formylglycinamide ribonucleotide (FGAR) and glutamine to yield formylglycinamidine ribonucleotide (FGAM) and glutamate. The FGAM synthase complex is composed of three subunits. PurQ produces an ammonia molecule by converting glutamine to glutamate. PurL transfers the ammonia molecule to FGAR to form FGAM in an ATP-dependent manner. PurS interacts with PurQ and PurL and is thought to assist in the transfer of the ammonia molecule from PurQ to PurL. In Mycolicibacterium paratuberculosis (strain ATCC BAA-968 / K-10) (Mycobacterium paratuberculosis), this protein is Phosphoribosylformylglycinamidine synthase subunit PurQ.